A 937-amino-acid polypeptide reads, in one-letter code: Translation initiation factor IF-2 (937 aa).

Disordered stretches follow at residues 157–230 and 250–346; these read KEAQ…AARK and IKAP…ESNF. Positions 173–205 are enriched in basic and acidic residues; sequence EAQKADAAKPVEAKADESAQEEKKRVAAEESKK. The span at 252-265 shows a compositional bias: low complexity; the sequence is APEPAAPVAAKPAE. Positions 267–293 are enriched in basic and acidic residues; the sequence is TLHKPADKKAGEKKDEKKPAVTADKKS. Over residues 295-304 the composition is skewed to polar residues; that stretch reads KSANVSSTWQ. A tr-type G domain is found at 437-606; the sequence is PRAPVVTVMG…LLQAEVLELK (170 aa). Residues 446-453 are G1; the sequence is GHVDHGKT. 446–453 serves as a coordination point for GTP; it reads GHVDHGKT. Positions 471-475 are G2; that stretch reads GITQH. The G3 stretch occupies residues 492-495; sequence DTPG. GTP contacts are provided by residues 492–496 and 546–549; these read DTPGH and NKID. The G4 stretch occupies residues 546 to 549; the sequence is NKID. Residues 582–584 are G5; that stretch reads SAK.

The protein belongs to the TRAFAC class translation factor GTPase superfamily. Classic translation factor GTPase family. IF-2 subfamily.

The protein localises to the cytoplasm. Its function is as follows. One of the essential components for the initiation of protein synthesis. Protects formylmethionyl-tRNA from spontaneous hydrolysis and promotes its binding to the 30S ribosomal subunits. Also involved in the hydrolysis of GTP during the formation of the 70S ribosomal complex. The protein is Translation initiation factor IF-2 of Janthinobacterium sp. (strain Marseille) (Minibacterium massiliensis).